Reading from the N-terminus, the 310-residue chain is Alpha/beta hydrolase domain-containing protein 17A (310 aa).

Catalysis depends on charge relay system residues Ser-190, Asp-255, and His-284. Ser-307 is modified (phosphoserine).

It belongs to the AB hydrolase superfamily. ABHD17 family. Post-translationally, palmitoylated on cysteine residues located in a cysteine cluster at the N-terminus which promotes membrane localization. Palmitoylation is required for post-synaptic localization and for depalmitoylating activity towards DLG4/PSD95.

It is found in the cell membrane. It localises to the endosome membrane. Its subcellular location is the cell projection. The protein resides in the dendritic spine. The protein localises to the postsynaptic density membrane. It carries out the reaction S-hexadecanoyl-L-cysteinyl-[protein] + H2O = L-cysteinyl-[protein] + hexadecanoate + H(+). Inhibited by palmostatin-B. Hydrolyzes fatty acids from S-acylated cysteine residues in proteins. Has depalmitoylating activity towards NRAS. Has depalmitoylating activity towards DLG4/PSD95. May have depalmitoylating activity towards MAP6. The sequence is that of Alpha/beta hydrolase domain-containing protein 17A from Homo sapiens (Human).